Reading from the N-terminus, the 181-residue chain is Ribulose bisphosphate carboxylase small subunit, chloroplastic 2 (181 aa).

Residues 1-57 (MAFLIMSSAAAVATGTNAAQASMIAPFTGLKSATSFPVSRKQNLDITSIASNGGRVQ) constitute a chloroplast transit peptide.

This sequence belongs to the RuBisCO small chain family. Heterohexadecamer of 8 large and 8 small subunits.

The protein localises to the plastid. Its subcellular location is the chloroplast. In terms of biological role, ruBisCO catalyzes two reactions: the carboxylation of D-ribulose 1,5-bisphosphate, the primary event in carbon dioxide fixation, as well as the oxidative fragmentation of the pentose substrate. Both reactions occur simultaneously and in competition at the same active site. Although the small subunit is not catalytic it is essential for maximal activity. The chain is Ribulose bisphosphate carboxylase small subunit, chloroplastic 2 from Nicotiana sylvestris (Wood tobacco).